The sequence spans 263 residues: HTH-type transcriptional repressor NanR (263 aa).

Positions 1–22 (MGLMNAFDSQTEDSSPAIGRNL) are disordered. Residues 30–98 (KKLSEMVEEE…NGERARVSRP (69 aa)) form the HTH gntR-type domain. The segment at residues 58-77 (ERELMAFFNVGRPSVREALA) is a DNA-binding region (H-T-H motif).

The protein belongs to the NanR family.

Transcriptional repressor that controls expression of the genes required for the catabolism of sialic acids. The polypeptide is HTH-type transcriptional repressor NanR (Shigella dysenteriae serotype 1 (strain Sd197)).